Consider the following 500-residue polypeptide: NAD(P)H-quinone oxidoreductase subunit 2 A, chloroplastic (500 aa).

The next 13 membrane-spanning stretches (helical) occupy residues 14 to 34 (LLLF…GLIL), 47 to 67 (IPWF…ALLF), 89 to 109 (IFQF…VEYI), 114 to 134 (MAIT…MFLC), 139 to 159 (FITI…LSGY), 173 to 193 (YLLM…WLYG), 217 to 237 (PGIS…LSPA), 285 to 305 (WHLL…LIAI), 313 to 333 (MLAY…IVGD), 344 to 364 (YMLF…LFGL), 385 to 405 (ALSL…AGFF), 408 to 428 (LHLF…IGLL), and 474 to 494 (MIVC…IIAI).

The protein belongs to the complex I subunit 2 family. In terms of assembly, NDH is composed of at least 16 different subunits, 5 of which are encoded in the nucleus.

The protein resides in the plastid. It localises to the chloroplast thylakoid membrane. The enzyme catalyses a plastoquinone + NADH + (n+1) H(+)(in) = a plastoquinol + NAD(+) + n H(+)(out). It catalyses the reaction a plastoquinone + NADPH + (n+1) H(+)(in) = a plastoquinol + NADP(+) + n H(+)(out). NDH shuttles electrons from NAD(P)H:plastoquinone, via FMN and iron-sulfur (Fe-S) centers, to quinones in the photosynthetic chain and possibly in a chloroplast respiratory chain. The immediate electron acceptor for the enzyme in this species is believed to be plastoquinone. Couples the redox reaction to proton translocation, and thus conserves the redox energy in a proton gradient. The sequence is that of NAD(P)H-quinone oxidoreductase subunit 2 A, chloroplastic from Pelargonium hortorum (Common geranium).